A 615-amino-acid chain; its full sequence is Alpha-1,3-galactosidase B (615 aa).

Residues 1–23 (MRTFLSLKTCLLSALLLCVNSIA) form the signal peptide. PbH1 repeat units lie at residues 282–313 (SKNISFNDVHIIPNTSKKRVLSGHDDGFHFMG), 423–445 (TPDAEIRNCHFGSCRARGLLVST), 446–467 (PGKVIIENNVFESSGSAILIAG), 478–500 (VKDVLIRNNDFRYPCNSSIYQFC), 520–541 (HRNIRIMDNTFHLFDYPILFAR), and 543–573 (VNGLTFSSNTLIRDTTYQPYHYRKEGITLEA).

The protein belongs to the glycosyl hydrolase 110 family. B subfamily.

It carries out the reaction Hydrolysis of terminal, non-reducing branched (1-&gt;3)-alpha-D-galactosidic residues, producing free D-galactose.. It catalyses the reaction Hydrolysis of terminal, non-reducing linear (1-&gt;3)-alpha-D-galactosidic residues, producing free D-galactose.. The catalysed reaction is Hydrolysis of terminal, non-reducing alpha-D-galactose residues in alpha-D-galactosides, including galactose oligosaccharides, galactomannans and galactolipids.. In terms of biological role, alpha-galactosidase. Removes both branched alpha-1,3-linked galactose residues of blood group B antigens and linear alpha-1,3-linked galactose structures. The sequence is that of Alpha-1,3-galactosidase B (glaB) from Bacteroides thetaiotaomicron (strain ATCC 29148 / DSM 2079 / JCM 5827 / CCUG 10774 / NCTC 10582 / VPI-5482 / E50).